The primary structure comprises 124 residues: Small ribosomal subunit protein uS12 (124 aa).

A 3-methylthioaspartic acid modification is found at Asp89. Residues 102–124 (LDTSGVNNRKHGRSKYGTKRPKS) are disordered. A compositionally biased stretch (basic residues) spans 109–124 (NRKHGRSKYGTKRPKS).

The protein belongs to the universal ribosomal protein uS12 family. As to quaternary structure, part of the 30S ribosomal subunit. Contacts proteins S8 and S17. May interact with IF1 in the 30S initiation complex.

In terms of biological role, with S4 and S5 plays an important role in translational accuracy. Its function is as follows. Interacts with and stabilizes bases of the 16S rRNA that are involved in tRNA selection in the A site and with the mRNA backbone. Located at the interface of the 30S and 50S subunits, it traverses the body of the 30S subunit contacting proteins on the other side and probably holding the rRNA structure together. The combined cluster of proteins S8, S12 and S17 appears to hold together the shoulder and platform of the 30S subunit. The sequence is that of Small ribosomal subunit protein uS12 from Francisella philomiragia subsp. philomiragia (strain ATCC 25017 / CCUG 19701 / FSC 153 / O#319-036).